The primary structure comprises 378 residues: Ribosomal RNA large subunit methyltransferase G (378 aa).

The protein belongs to the methyltransferase superfamily. RlmG family.

The protein localises to the cytoplasm. The enzyme catalyses guanosine(1835) in 23S rRNA + S-adenosyl-L-methionine = N(2)-methylguanosine(1835) in 23S rRNA + S-adenosyl-L-homocysteine + H(+). Functionally, specifically methylates the guanine in position 1835 (m2G1835) of 23S rRNA. The polypeptide is Ribosomal RNA large subunit methyltransferase G (Enterobacter sp. (strain 638)).